The following is a 500-amino-acid chain: NAD(P)H-quinone oxidoreductase chain 4, chloroplastic (500 aa).

The next 14 membrane-spanning stretches (helical) occupy residues 4–24 (FPWL…IFFL), 37–57 (IGIC…FFQL), 87–107 (IGPI…AWPV), 113–130 (LFHF…GLFS), 134–154 (LLLF…LLSM), 167–187 (FILY…GMGL), 208–228 (ALEI…LPII), 242–262 (HYST…YGLI), 272–292 (AHSI…IYAA), 305–325 (IAYS…SITD), 330–350 (GAVL…FLAG), 386–406 (LALP…GIIT), 416–436 (VLIT…SLSM), and 462–482 (LFIS…PDFV).

The protein belongs to the complex I subunit 4 family.

It is found in the plastid. The protein resides in the chloroplast thylakoid membrane. It catalyses the reaction a plastoquinone + NADH + (n+1) H(+)(in) = a plastoquinol + NAD(+) + n H(+)(out). It carries out the reaction a plastoquinone + NADPH + (n+1) H(+)(in) = a plastoquinol + NADP(+) + n H(+)(out). The chain is NAD(P)H-quinone oxidoreductase chain 4, chloroplastic from Ceratophyllum demersum (Rigid hornwort).